The sequence spans 344 residues: 4-hydroxy-3-methylbut-2-en-1-yl diphosphate synthase (flavodoxin) (344 aa).

[4Fe-4S] cluster is bound by residues C253, C256, C288, and E295.

The protein belongs to the IspG family. Requires [4Fe-4S] cluster as cofactor.

It carries out the reaction (2E)-4-hydroxy-3-methylbut-2-enyl diphosphate + oxidized [flavodoxin] + H2O + 2 H(+) = 2-C-methyl-D-erythritol 2,4-cyclic diphosphate + reduced [flavodoxin]. It participates in isoprenoid biosynthesis; isopentenyl diphosphate biosynthesis via DXP pathway; isopentenyl diphosphate from 1-deoxy-D-xylulose 5-phosphate: step 5/6. In terms of biological role, converts 2C-methyl-D-erythritol 2,4-cyclodiphosphate (ME-2,4cPP) into 1-hydroxy-2-methyl-2-(E)-butenyl 4-diphosphate. The protein is 4-hydroxy-3-methylbut-2-en-1-yl diphosphate synthase (flavodoxin) of Thermotoga petrophila (strain ATCC BAA-488 / DSM 13995 / JCM 10881 / RKU-1).